The chain runs to 275 residues: Large ribosomal subunit protein uL2 (275 aa).

Disordered stretches follow at residues 28 to 48 and 223 to 275; these read KPYA…NNGR and VVMN…RNKK.

The protein belongs to the universal ribosomal protein uL2 family. In terms of assembly, part of the 50S ribosomal subunit. Forms a bridge to the 30S subunit in the 70S ribosome.

Functionally, one of the primary rRNA binding proteins. Required for association of the 30S and 50S subunits to form the 70S ribosome, for tRNA binding and peptide bond formation. It has been suggested to have peptidyltransferase activity; this is somewhat controversial. Makes several contacts with the 16S rRNA in the 70S ribosome. The polypeptide is Large ribosomal subunit protein uL2 (Photobacterium profundum (strain SS9)).